A 288-amino-acid chain; its full sequence is Ankyrin repeat and SOCS box protein 8 (288 aa).

Ser17 bears the Phosphoserine mark. ANK repeat units lie at residues 52–81, 85–113, 117–146, and 150–179; these read GTLK…EVNA, YNRT…NPNA, NRDT…SVNA, and NNDT…EVRV. The SOCS box domain occupies 235–288; sequence QLCEKLTVLCSAPGTLKTLARYAVRRSLGLQYLPDAVKGLPLPVSLKDYLLLLE.

It belongs to the ankyrin SOCS box (ASB) family. In terms of assembly, interacts with TBK1; this interaction promotes TBK1 proteasomal degradation. In terms of processing, phosphorylated by TBK1.

Its subcellular location is the cytoplasm. The protein operates within protein modification; protein ubiquitination. Its function is as follows. May be a substrate-recognition component of a SCF-like ECS (Elongin-Cullin-SOCS-box protein) E3 ubiquitin-protein ligase complex which mediates the ubiquitination and subsequent proteasomal degradation of target proteins. Inhibits IFN-beta production through the IRF3 signaling pathway by targeting TBK1 via 'Lys-48'-linked ubiquitination, leading to its proteasomal degradation. This Mus musculus (Mouse) protein is Ankyrin repeat and SOCS box protein 8 (Asb8).